Reading from the N-terminus, the 553-residue chain is Meiotic expression up-regulated protein 18 (553 aa).

The interval 267–305 (SNETLCSNDSKHRIARLKNEDNTQKPISKKRKSKKASHK) is disordered. Residues 275 to 289 (DSKHRIARLKNEDNT) show a composition bias toward basic and acidic residues. Residues 293-304 (ISKKRKSKKASH) are compositionally biased toward basic residues.

This chain is Meiotic expression up-regulated protein 18 (meu18), found in Schizosaccharomyces pombe (strain 972 / ATCC 24843) (Fission yeast).